The sequence spans 61 residues: MATKNRTIIKKYADRWHKEACHLYAKWLNAKRQGDEEAANYYFSKYITAGDNWINYTKFAH.

This is an uncharacterized protein from Haemophilus influenzae (Bacteriophage HP1).